Consider the following 189-residue polypeptide: Large ribosomal subunit protein uL6 (189 aa).

Belongs to the universal ribosomal protein uL6 family. In terms of assembly, part of the 50S ribosomal subunit.

This protein binds to the 23S rRNA, and is important in its secondary structure. It is located near the subunit interface in the base of the L7/L12 stalk, and near the tRNA binding site of the peptidyltransferase center. The polypeptide is Large ribosomal subunit protein uL6 (Microcystis aeruginosa (strain NIES-843 / IAM M-2473)).